We begin with the raw amino-acid sequence, 78 residues long: NAD(P)H-quinone oxidoreductase subunit O (78 aa).

This sequence belongs to the complex I NdhO subunit family. As to quaternary structure, NDH-1 can be composed of about 15 different subunits; different subcomplexes with different compositions have been identified which probably have different functions.

The protein localises to the cellular thylakoid membrane. It catalyses the reaction a plastoquinone + NADH + (n+1) H(+)(in) = a plastoquinol + NAD(+) + n H(+)(out). The enzyme catalyses a plastoquinone + NADPH + (n+1) H(+)(in) = a plastoquinol + NADP(+) + n H(+)(out). NDH-1 shuttles electrons from an unknown electron donor, via FMN and iron-sulfur (Fe-S) centers, to quinones in the respiratory and/or the photosynthetic chain. The immediate electron acceptor for the enzyme in this species is believed to be plastoquinone. Couples the redox reaction to proton translocation, and thus conserves the redox energy in a proton gradient. Cyanobacterial NDH-1 also plays a role in inorganic carbon-concentration. This Prochlorococcus marinus (strain MIT 9301) protein is NAD(P)H-quinone oxidoreductase subunit O.